We begin with the raw amino-acid sequence, 86 residues long: Putative membrane protein insertion efficiency factor (86 aa).

This sequence belongs to the UPF0161 family.

The protein localises to the cell inner membrane. Functionally, could be involved in insertion of integral membrane proteins into the membrane. The sequence is that of Putative membrane protein insertion efficiency factor from Ruegeria sp. (strain TM1040) (Silicibacter sp.).